A 351-amino-acid chain; its full sequence is Phospho-N-acetylmuramoyl-pentapeptide-transferase (351 aa).

The next 10 helical transmembrane spans lie at 17 to 37 (TAYATIFAFLLALIFGPFIIL), 63 to 83 (IPTMGGILIFFCVLVSLFFWI), 85 to 105 (FWNIYFLIILFVMVSFACLGF), 124 to 144 (FKIYGQILFSCISVTMLYYFG), 158 to 178 (SLKLDLGVLYIPFGMFILISA), 190 to 210 (GLAIGLSIVVTGALVIIAYLA), 230 to 250 (LVVFLGALLGGSFGFLWFNAY), 254 to 274 (IMMGDTGSLSIGAVLGMTALI), 279 to 299 (ILFAILAGVFVVETLSVIIQV), and 328 to 348 (QVVIRFWIIGLIFAIIALSTL).

Belongs to the glycosyltransferase 4 family. MraY subfamily. The cofactor is Mg(2+).

The protein localises to the cell inner membrane. It carries out the reaction UDP-N-acetyl-alpha-D-muramoyl-L-alanyl-gamma-D-glutamyl-meso-2,6-diaminopimeloyl-D-alanyl-D-alanine + di-trans,octa-cis-undecaprenyl phosphate = di-trans,octa-cis-undecaprenyl diphospho-N-acetyl-alpha-D-muramoyl-L-alanyl-D-glutamyl-meso-2,6-diaminopimeloyl-D-alanyl-D-alanine + UMP. The protein operates within cell wall biogenesis; peptidoglycan biosynthesis. Functionally, catalyzes the initial step of the lipid cycle reactions in the biosynthesis of the cell wall peptidoglycan: transfers peptidoglycan precursor phospho-MurNAc-pentapeptide from UDP-MurNAc-pentapeptide onto the lipid carrier undecaprenyl phosphate, yielding undecaprenyl-pyrophosphoryl-MurNAc-pentapeptide, known as lipid I. The protein is Phospho-N-acetylmuramoyl-pentapeptide-transferase of Borrelia turicatae (strain 91E135).